A 306-amino-acid polypeptide reads, in one-letter code: MGSQLALKSRIASTASLEKIFNAQEMIASSHIAKARDVALNAKPYTDAIFDAVQALVAHTHIDHPIVKKNEDNPRVAVLALTSDRGMAGPYTSSIIRETESLLARLDEQGKQPELYVYGRRGVTYYKYRNRPVAGTWEGDTDQPGVEVAESISKALLDAYMKPADQGGVSELYIVFTEFVNMVVQKVRVLRMLPVELVLPEQPESGPVPESDADAATPLYAFEPSVDEVLDAILPKYIQSRIHECLLTAAASETASRQNAMHTATDNARSLIDELTRKLNASRQASITQELTEIIGSADALNKKEE.

It belongs to the ATPase gamma chain family. As to quaternary structure, F-type ATPases have 2 components, CF(1) - the catalytic core - and CF(0) - the membrane proton channel. CF(1) has five subunits: alpha(3), beta(3), gamma(1), delta(1), epsilon(1). CF(0) has three main subunits: a, b and c.

The protein resides in the cell membrane. Functionally, produces ATP from ADP in the presence of a proton gradient across the membrane. The gamma chain is believed to be important in regulating ATPase activity and the flow of protons through the CF(0) complex. This is ATP synthase gamma chain from Bifidobacterium adolescentis (strain ATCC 15703 / DSM 20083 / NCTC 11814 / E194a).